We begin with the raw amino-acid sequence, 419 residues long: L-rhamnose isomerase (419 aa).

3 residues coordinate Mn(2+): His-262, Asp-294, and Asp-296.

Belongs to the rhamnose isomerase family. As to quaternary structure, homotetramer. Mn(2+) serves as cofactor.

The protein resides in the cytoplasm. The catalysed reaction is L-rhamnopyranose = L-rhamnulose. It participates in carbohydrate degradation; L-rhamnose degradation; glycerone phosphate from L-rhamnose: step 1/3. Its function is as follows. Catalyzes the interconversion of L-rhamnose and L-rhamnulose. This is L-rhamnose isomerase from Salmonella paratyphi A (strain AKU_12601).